The sequence spans 127 residues: UPF0102 protein Glov_2230 (127 aa).

Belongs to the UPF0102 family.

The protein is UPF0102 protein Glov_2230 of Trichlorobacter lovleyi (strain ATCC BAA-1151 / DSM 17278 / SZ) (Geobacter lovleyi).